Here is a 398-residue protein sequence, read N- to C-terminus: Argininosuccinate synthase (398 aa).

Residue 8–16 (AYSGGLDTS) coordinates ATP. Position 87 (Tyr87) interacts with L-citrulline. An ATP-binding site is contributed by Gly117. Residues Thr119, Asn123, and Asp124 each coordinate L-aspartate. Asn123 is an L-citrulline binding site. The L-citrulline site is built by Arg127, Ser175, Glu260, and Tyr272.

The protein belongs to the argininosuccinate synthase family. Type 1 subfamily. In terms of assembly, homotetramer.

It is found in the cytoplasm. It catalyses the reaction L-citrulline + L-aspartate + ATP = 2-(N(omega)-L-arginino)succinate + AMP + diphosphate + H(+). It functions in the pathway amino-acid biosynthesis; L-arginine biosynthesis; L-arginine from L-ornithine and carbamoyl phosphate: step 2/3. The sequence is that of Argininosuccinate synthase from Mycobacterium marinum (strain ATCC BAA-535 / M).